Consider the following 176-residue polypeptide: Retinol-binding protein 4-B (176 aa).

Position 1 is an N-acetylserine (Ser1). Cystine bridges form between Cys3–Cys159, Cys69–Cys173, and Cys119–Cys128. A substrate-binding site is contributed by Gln97.

Belongs to the calycin superfamily. Lipocalin family.

The protein localises to the secreted. Functionally, RBP delivers retinol from the liver stores to the peripheral tissues. In plasma, the RBP-retinol complex interacts with transthyretin, this prevents its loss by filtration through the kidney glomeruli. The sequence is that of Retinol-binding protein 4-B (rbp4b) from Oncorhynchus mykiss (Rainbow trout).